Reading from the N-terminus, the 166-residue chain is NAD(P)H-quinone oxidoreductase subunit I, chloroplastic (166 aa).

4Fe-4S ferredoxin-type domains lie at 55–84 (GRIHFEFDKCIACEVCVRVCPIDLPVVDWK) and 95–124 (LNYSIDFGICIFCGNCVEYCPTNCLSMTEE). 8 residues coordinate [4Fe-4S] cluster: C64, C67, C70, C74, C104, C107, C110, and C114.

The protein belongs to the complex I 23 kDa subunit family. In terms of assembly, NDH is composed of at least 16 different subunits, 5 of which are encoded in the nucleus. [4Fe-4S] cluster is required as a cofactor.

Its subcellular location is the plastid. It is found in the chloroplast thylakoid membrane. It carries out the reaction a plastoquinone + NADH + (n+1) H(+)(in) = a plastoquinol + NAD(+) + n H(+)(out). The catalysed reaction is a plastoquinone + NADPH + (n+1) H(+)(in) = a plastoquinol + NADP(+) + n H(+)(out). In terms of biological role, NDH shuttles electrons from NAD(P)H:plastoquinone, via FMN and iron-sulfur (Fe-S) centers, to quinones in the photosynthetic chain and possibly in a chloroplast respiratory chain. The immediate electron acceptor for the enzyme in this species is believed to be plastoquinone. Couples the redox reaction to proton translocation, and thus conserves the redox energy in a proton gradient. The polypeptide is NAD(P)H-quinone oxidoreductase subunit I, chloroplastic (Palafoxia arida (Spanish needles)).